The chain runs to 343 residues: CCN family member 3 (343 aa).

An N-terminal signal peptide occupies residues 1-18 (MTPHLALCFILLIQQVAS). The IGFBP N-terminal domain occupies 19–90 (QKCPSQCDQC…RMETGTCMAL (72 aa)). 6 disulfide bridges follow: Cys-21/Cys-46, Cys-25/Cys-48, Cys-28/Cys-49, Cys-35/Cys-52, Cys-60/Cys-74, and Cys-66/Cys-87. Residues 93–159 (NSCVFDGVVY…GECCEKWVCD (67 aa)) form the VWFC domain. A TSP type-1 domain is found at 190–235 (ACIAQTTEWSACSKTCGMGVSSRVTNRNARCEMQKQIRLCMVRSCE). 5 cysteine pairs are disulfide-bonded: Cys-249/Cys-286, Cys-266/Cys-300, Cys-277/Cys-316, Cys-280/Cys-318, and Cys-285/Cys-322. The CTCK domain occupies 249-323 (CVRVRKTTKP…STCVCHYNCP (75 aa)). N-linked (GlcNAc...) asparagine glycosylation is present at Asn-265.

Belongs to the CCN family.

It is found in the secreted. It localises to the cytoplasm. The protein localises to the cell junction. The protein resides in the gap junction. Functionally, immediate-early protein playing a role in various cellular processes including proliferation, adhesion, migration, differentiation and survival. Acts by binding to integrins or membrane receptors such as NOTCH1. The chain is CCN family member 3 (ccn3) from Xenopus laevis (African clawed frog).